The primary structure comprises 127 residues: Large ribosomal subunit protein bL12 (127 aa).

Belongs to the bacterial ribosomal protein bL12 family. In terms of assembly, homodimer. Part of the ribosomal stalk of the 50S ribosomal subunit. Forms a multimeric L10(L12)X complex, where L10 forms an elongated spine to which 2 to 4 L12 dimers bind in a sequential fashion. Binds GTP-bound translation factors.

In terms of biological role, forms part of the ribosomal stalk which helps the ribosome interact with GTP-bound translation factors. Is thus essential for accurate translation. The protein is Large ribosomal subunit protein bL12 of Thiobacillus denitrificans (strain ATCC 25259 / T1).